A 250-amino-acid polypeptide reads, in one-letter code: DNA polymerase sliding clamp (250 aa).

Belongs to the PCNA family. In terms of assembly, homotrimer. The subunits circularize to form a toroid; DNA passes through its center. Replication factor C (RFC) is required to load the toroid on the DNA.

Functionally, sliding clamp subunit that acts as a moving platform for DNA processing. Responsible for tethering the catalytic subunit of DNA polymerase and other proteins to DNA during high-speed replication. The chain is DNA polymerase sliding clamp from Methanococcus maripaludis (strain C7 / ATCC BAA-1331).